The primary structure comprises 131 residues: Large ribosomal subunit protein eL14 (131 aa).

It belongs to the eukaryotic ribosomal protein eL14 family. Component of the large ribosomal subunit. Mature ribosomes consist of a small (40S) and a large (60S) subunit. The 40S subunit contains about 32 different proteins and 1 molecule of RNA (18S). The 60S subunit contains 45 different proteins and 3 molecules of RNA (25S, 5.8S and 5S).

It localises to the cytoplasm. In terms of biological role, component of the ribosome, a large ribonucleoprotein complex responsible for the synthesis of proteins in the cell. The small ribosomal subunit (SSU) binds messenger RNAs (mRNAs) and translates the encoded message by selecting cognate aminoacyl-transfer RNA (tRNA) molecules. The large subunit (LSU) contains the ribosomal catalytic site termed the peptidyl transferase center (PTC), which catalyzes the formation of peptide bonds, thereby polymerizing the amino acids delivered by tRNAs into a polypeptide chain. The nascent polypeptides leave the ribosome through a tunnel in the LSU and interact with protein factors that function in enzymatic processing, targeting, and the membrane insertion of nascent chains at the exit of the ribosomal tunnel. In Candida albicans (strain SC5314 / ATCC MYA-2876) (Yeast), this protein is Large ribosomal subunit protein eL14.